Reading from the N-terminus, the 140-residue chain is Nucleoside diphosphate kinase (140 aa).

Positions 11, 59, 87, 93, 104, and 114 each coordinate ATP. Catalysis depends on His-117, which acts as the Pros-phosphohistidine intermediate.

Belongs to the NDK family. Homotetramer. Requires Mg(2+) as cofactor.

Its subcellular location is the cytoplasm. The catalysed reaction is a 2'-deoxyribonucleoside 5'-diphosphate + ATP = a 2'-deoxyribonucleoside 5'-triphosphate + ADP. It carries out the reaction a ribonucleoside 5'-diphosphate + ATP = a ribonucleoside 5'-triphosphate + ADP. Major role in the synthesis of nucleoside triphosphates other than ATP. The ATP gamma phosphate is transferred to the NDP beta phosphate via a ping-pong mechanism, using a phosphorylated active-site intermediate. The chain is Nucleoside diphosphate kinase from Granulibacter bethesdensis (strain ATCC BAA-1260 / CGDNIH1).